The sequence spans 379 residues: Putative glutamate--cysteine ligase 2 (379 aa).

The protein belongs to the glutamate--cysteine ligase type 2 family. YbdK subfamily.

The catalysed reaction is L-cysteine + L-glutamate + ATP = gamma-L-glutamyl-L-cysteine + ADP + phosphate + H(+). ATP-dependent carboxylate-amine ligase which exhibits weak glutamate--cysteine ligase activity. This chain is Putative glutamate--cysteine ligase 2, found in Roseiflexus sp. (strain RS-1).